A 62-amino-acid polypeptide reads, in one-letter code: Large ribosomal subunit protein eL24 (62 aa).

Zn(2+) is bound by residues Cys6, Cys9, Cys32, and Cys36. The C4-type zinc finger occupies 6–36 (CYFCGKMLEPGTGKLYVKKDGSTYFMCSSKC).

This sequence belongs to the eukaryotic ribosomal protein eL24 family. Part of the 50S ribosomal subunit. Forms a cluster with proteins L3 and L14. Zn(2+) serves as cofactor.

Binds to the 23S rRNA. This chain is Large ribosomal subunit protein eL24, found in Methanosarcina acetivorans (strain ATCC 35395 / DSM 2834 / JCM 12185 / C2A).